Consider the following 335-residue polypeptide: Succinylglutamate desuccinylase (335 aa).

Zn(2+)-binding residues include His59, Glu62, and His151. Glu215 is a catalytic residue.

Belongs to the AspA/AstE family. Succinylglutamate desuccinylase subfamily. The cofactor is Zn(2+).

The enzyme catalyses N-succinyl-L-glutamate + H2O = L-glutamate + succinate. Its pathway is amino-acid degradation; L-arginine degradation via AST pathway; L-glutamate and succinate from L-arginine: step 5/5. Its function is as follows. Transforms N(2)-succinylglutamate into succinate and glutamate. The protein is Succinylglutamate desuccinylase of Pseudomonas putida (strain GB-1).